The following is a 455-amino-acid chain: Ectonucleoside triphosphate diphosphohydrolase 6 (455 aa).

The Cytoplasmic portion of the chain corresponds to 1–12; the sequence is MRKIPNHGTLRM. Residues 13–32 traverse the membrane as a helical segment; it reads TKVAYPLGLCVGLFIYVAYI. Residues 33–455 lie on the Lumenal side of the membrane; that stretch reads KWHRASAAQA…SLKRQKVPAL (423 aa). Catalysis depends on Glu-196, which acts as the Proton acceptor. Cystine bridges form between Cys-297-Cys-327 and Cys-387-Cys-401.

The protein belongs to the GDA1/CD39 NTPase family. Mg(2+) serves as cofactor. The cofactor is Ca(2+). N-glycosylated.

The protein localises to the golgi apparatus membrane. Its subcellular location is the secreted. It localises to the cell membrane. The catalysed reaction is a ribonucleoside 5'-diphosphate + H2O = a ribonucleoside 5'-phosphate + phosphate + H(+). It carries out the reaction IDP + H2O = IMP + phosphate + H(+). The enzyme catalyses GDP + H2O = GMP + phosphate + H(+). It catalyses the reaction UDP + H2O = UMP + phosphate + H(+). Catalyzes the hydrolysis of nucleoside triphosphates and diphosphates in a calcium- or magnesium-dependent manner. Has a strong preference for nucleoside diphosphates, preferentially hydrolyzes GDP, IDP, and UDP, with slower hydrolysis of CDP, ITP, GTP, CTP, ADP, and UTP and virtually no hydrolysis of ATP. The membrane bound form might support glycosylation reactions in the Golgi apparatus and, when released from cells, might catalyze the hydrolysis of extracellular nucleotides. The chain is Ectonucleoside triphosphate diphosphohydrolase 6 from Mus musculus (Mouse).